The chain runs to 261 residues: uncharacterized protein (261 aa).

Residues 16-147 (KQTSLVLQNL…QTNVNVLRSQ (132 aa)) are a coiled coil.

It is found in the cytoplasm. This is an uncharacterized protein from Schizosaccharomyces pombe (strain 972 / ATCC 24843) (Fission yeast).